The following is a 98-amino-acid chain: uncharacterized protein (98 aa).

Its subcellular location is the cytoplasm. This is an uncharacterized protein from Saccharomyces cerevisiae (strain ATCC 204508 / S288c) (Baker's yeast).